The primary structure comprises 249 residues: Octanoyltransferase (249 aa).

The disordered stretch occupies residues 1–23 (MVNSPQNPRQDQRQDLDLTSFSA). One can recognise a BPL/LPL catalytic domain in the interval 57–241 (GEAPELVWLL…AFEELFGPTR (185 aa)). Substrate contacts are provided by residues 95–102 (RGGQLTYH), 170–172 (AIG), and 183–185 (GIA). Residue Cys-201 is the Acyl-thioester intermediate of the active site.

The protein belongs to the LipB family.

It is found in the cytoplasm. The catalysed reaction is octanoyl-[ACP] + L-lysyl-[protein] = N(6)-octanoyl-L-lysyl-[protein] + holo-[ACP] + H(+). It functions in the pathway protein modification; protein lipoylation via endogenous pathway; protein N(6)-(lipoyl)lysine from octanoyl-[acyl-carrier-protein]: step 1/2. Catalyzes the transfer of endogenously produced octanoic acid from octanoyl-acyl-carrier-protein onto the lipoyl domains of lipoate-dependent enzymes. Lipoyl-ACP can also act as a substrate although octanoyl-ACP is likely to be the physiological substrate. The polypeptide is Octanoyltransferase (Bradyrhizobium diazoefficiens (strain JCM 10833 / BCRC 13528 / IAM 13628 / NBRC 14792 / USDA 110)).